A 660-amino-acid polypeptide reads, in one-letter code: Bifunctional polymyxin resistance protein ArnA (660 aa).

The tract at residues 1 to 304 (MKAVIFAYHD…TLGLVAGARL (304 aa)) is formyltransferase ArnAFT. The active-site Proton donor; for formyltransferase activity is the histidine 104. (6R)-10-formyltetrahydrofolate-binding positions include arginine 114 and 136-140 (VKRAD). Residues 314–660 (RRIRVLILGV…RSVDVAERAS (347 aa)) are dehydrogenase ArnADH. Residues aspartate 347 and 368 to 369 (DI) contribute to the NAD(+) site. UDP-alpha-D-glucuronate is bound by residues alanine 393, tyrosine 398, and 432 to 433 (TS). Glutamate 434 (proton acceptor; for decarboxylase activity) is an active-site residue. Residues arginine 460, asparagine 492, 526–535 (KLIDGGQQKR), and tyrosine 613 contribute to the UDP-alpha-D-glucuronate site. The Proton donor; for decarboxylase activity role is filled by arginine 619.

It in the N-terminal section; belongs to the Fmt family. UDP-L-Ara4N formyltransferase subfamily. The protein in the C-terminal section; belongs to the NAD(P)-dependent epimerase/dehydratase family. UDP-glucuronic acid decarboxylase subfamily. As to quaternary structure, homohexamer, formed by a dimer of trimers.

It catalyses the reaction UDP-alpha-D-glucuronate + NAD(+) = UDP-beta-L-threo-pentopyranos-4-ulose + CO2 + NADH. The catalysed reaction is UDP-4-amino-4-deoxy-beta-L-arabinose + (6R)-10-formyltetrahydrofolate = UDP-4-deoxy-4-formamido-beta-L-arabinose + (6S)-5,6,7,8-tetrahydrofolate + H(+). Its pathway is nucleotide-sugar biosynthesis; UDP-4-deoxy-4-formamido-beta-L-arabinose biosynthesis; UDP-4-deoxy-4-formamido-beta-L-arabinose from UDP-alpha-D-glucuronate: step 1/3. It participates in nucleotide-sugar biosynthesis; UDP-4-deoxy-4-formamido-beta-L-arabinose biosynthesis; UDP-4-deoxy-4-formamido-beta-L-arabinose from UDP-alpha-D-glucuronate: step 3/3. It functions in the pathway bacterial outer membrane biogenesis; lipopolysaccharide biosynthesis. Bifunctional enzyme that catalyzes the oxidative decarboxylation of UDP-glucuronic acid (UDP-GlcUA) to UDP-4-keto-arabinose (UDP-Ara4O) and the addition of a formyl group to UDP-4-amino-4-deoxy-L-arabinose (UDP-L-Ara4N) to form UDP-L-4-formamido-arabinose (UDP-L-Ara4FN). The modified arabinose is attached to lipid A and is required for resistance to polymyxin and cationic antimicrobial peptides. This chain is Bifunctional polymyxin resistance protein ArnA, found in Salmonella heidelberg (strain SL476).